A 473-amino-acid polypeptide reads, in one-letter code: 3-isopropylmalate dehydratase large subunit (473 aa).

[4Fe-4S] cluster-binding residues include Cys348, Cys408, and Cys411. The tract at residues Gly421 to Lys440 is disordered.

It belongs to the aconitase/IPM isomerase family. LeuC type 1 subfamily. In terms of assembly, heterodimer of LeuC and LeuD. [4Fe-4S] cluster is required as a cofactor.

The enzyme catalyses (2R,3S)-3-isopropylmalate = (2S)-2-isopropylmalate. It functions in the pathway amino-acid biosynthesis; L-leucine biosynthesis; L-leucine from 3-methyl-2-oxobutanoate: step 2/4. In terms of biological role, catalyzes the isomerization between 2-isopropylmalate and 3-isopropylmalate, via the formation of 2-isopropylmaleate. The protein is 3-isopropylmalate dehydratase large subunit of Haloferax volcanii (strain ATCC 29605 / DSM 3757 / JCM 8879 / NBRC 14742 / NCIMB 2012 / VKM B-1768 / DS2) (Halobacterium volcanii).